Here is a 303-residue protein sequence, read N- to C-terminus: Ribosomal protein L11 methyltransferase (303 aa).

Residues Thr146, Gly167, Asp189, and Asn236 each coordinate S-adenosyl-L-methionine.

Belongs to the methyltransferase superfamily. PrmA family.

It is found in the cytoplasm. The enzyme catalyses L-lysyl-[protein] + 3 S-adenosyl-L-methionine = N(6),N(6),N(6)-trimethyl-L-lysyl-[protein] + 3 S-adenosyl-L-homocysteine + 3 H(+). Functionally, methylates ribosomal protein L11. In Acinetobacter baylyi (strain ATCC 33305 / BD413 / ADP1), this protein is Ribosomal protein L11 methyltransferase.